The following is a 739-amino-acid chain: Lysine decarboxylase (739 aa).

Residue Lys-367 is modified to N6-(pyridoxal phosphate)lysine. The span at 714–726 (ADEPGDKPSDTVK) shows a compositional bias: basic and acidic residues. The disordered stretch occupies residues 714–739 (ADEPGDKPSDTVKKAPGKKPSAAKKS). Basic residues predominate over residues 728–739 (APGKKPSAAKKS).

This sequence belongs to the Orn/Lys/Arg decarboxylase class-I family. It depends on pyridoxal 5'-phosphate as a cofactor.

It localises to the cytoplasm. It catalyses the reaction L-lysine + H(+) = cadaverine + CO2. This Hafnia alvei protein is Lysine decarboxylase.